The chain runs to 86 residues: Large ribosomal subunit protein bL27 (86 aa).

A compositionally biased stretch (gly residues) spans Met-1 to Thr-10. A disordered region spans residues Met-1–Leu-21.

It belongs to the bacterial ribosomal protein bL27 family.

This Bordetella petrii (strain ATCC BAA-461 / DSM 12804 / CCUG 43448) protein is Large ribosomal subunit protein bL27.